The chain runs to 430 residues: Histidine--tRNA ligase (430 aa).

This sequence belongs to the class-II aminoacyl-tRNA synthetase family. As to quaternary structure, homodimer.

It is found in the cytoplasm. It catalyses the reaction tRNA(His) + L-histidine + ATP = L-histidyl-tRNA(His) + AMP + diphosphate + H(+). The sequence is that of Histidine--tRNA ligase from Acinetobacter baumannii (strain ATCC 17978 / DSM 105126 / CIP 53.77 / LMG 1025 / NCDC KC755 / 5377).